We begin with the raw amino-acid sequence, 114 residues long: Nascent polypeptide-associated complex protein (114 aa).

Positions 5–69 (PSQFKNLERM…AKEAQKEEPK (65 aa)) constitute an NAC-A/B domain.

The protein belongs to the NAC-alpha family. Homodimer. Interacts with the ribosome. Binds ribosomal RNA.

Its function is as follows. Contacts the emerging nascent chain on the ribosome. This Sulfurisphaera tokodaii (strain DSM 16993 / JCM 10545 / NBRC 100140 / 7) (Sulfolobus tokodaii) protein is Nascent polypeptide-associated complex protein.